An 854-amino-acid chain; its full sequence is Probable inactive serine/threonine-protein kinase DDB_G0274821 (854 aa).

Residues 1 to 266 (MPIKESFKRI…WPKLFIHPFF (266 aa)) form the Protein kinase domain. N-linked (GlcNAc...) asparagine glycosylation is found at asparagine 32 and asparagine 106. The segment at 116–135 (NNNNNNNNNNNNNNNNNNNN) is disordered. Asparagine 163, asparagine 279, asparagine 283, and asparagine 290 each carry an N-linked (GlcNAc...) asparagine glycan. The interval 289 to 331 (LNKSSSSSSSSSSSSSSSSSSSSSSSLSFQQQQQPNNISSPNL) is disordered. Low complexity predominate over residues 292–322 (SSSSSSSSSSSSSSSSSSSSSSSLSFQQQQQ). 3 N-linked (GlcNAc...) asparagine glycosylation sites follow: asparagine 325, asparagine 347, and asparagine 365. The interval 384–408 (IISPNRPSSPPLSSLSSCSSSSSSS) is disordered. N-linked (GlcNAc...) asparagine glycosylation occurs at asparagine 414. Residues 425–446 (NNNNNNNNNNNNNNNNNNNNNN) are disordered. Asparagine 520, asparagine 541, and asparagine 620 each carry an N-linked (GlcNAc...) asparagine glycan. The interval 627–650 (SSPPPSSSSSSSSPSSPSSTSPSL) is disordered. Positions 633-650 (SSSSSSSPSSPSSTSPSL) are enriched in low complexity. An N-linked (GlcNAc...) asparagine glycan is attached at asparagine 757. The helical transmembrane segment at 770–792 (HWRVQISFLNILFILITINNNFI) threads the bilayer.

This sequence belongs to the protein kinase superfamily. Ser/Thr protein kinase family.

It localises to the membrane. The chain is Probable inactive serine/threonine-protein kinase DDB_G0274821 from Dictyostelium discoideum (Social amoeba).